Consider the following 292-residue polypeptide: Putative ribonuclease 3 (292 aa).

The region spanning 32–158 (LGMSDEYIPY…FFGATEWLID (127 aa)) is the RNase III domain. The region spanning 204–276 (DAKTRFNEVI…ASRALETLAL (73 aa)) is the DRBM domain.

It belongs to the IIV-6 142R family.

It carries out the reaction Endonucleolytic cleavage to 5'-phosphomonoester.. Digests double-stranded RNA. The sequence is that of Putative ribonuclease 3 from Acheta domesticus (House cricket).